The following is a 595-amino-acid chain: Coronatine-insensitive protein homolog 1a (595 aa).

One can recognise an F-box domain in the interval 20–62; it reads WVPDEALHLVMGHVEDPRDREAASRVCRRWHRIDALTRKHVTV. Residues arginine 90, arginine 351, tyrosine 389, arginine 412, and arginine 499 each contribute to the jasmonate site.

In terms of assembly, interacts with TIFY6A/JAZ3, TIFY6B/JAZ4 and TIFY11D/JAZ12 in a coronatine-dependent manner. Interacts with TIFY9/JAZ5, TIFY10A/JAZ6, TIFY10B/JAZ7, TIFY11A/JAZ9 and TIFY11C/JAZ11 in a coronatine-dependent manner.

Functionally, involved in jasmonate (JA) signaling. Required for jasmonate signaling in plant defense responses. Can complement Arabidopsis coi1-1 mutant and restore jasmonate signaling. Required for JA-regulated defense responses to infestation by the leaffolder Cnaphalocrocis medinalis. May act on an initial response of jasmonate-regulated gene expression toward drought tolerance as part of a BHLH148-TIFY11D/JAZ12-COI1A complex. Component of SCF(COI1) E3 ubiquitin ligase complexes, which may mediate the ubiquitination and subsequent proteasomal degradation of target proteins, including TIFY/JAZ family. This is Coronatine-insensitive protein homolog 1a from Oryza sativa subsp. indica (Rice).